The sequence spans 477 residues: P3 protein (477 aa).

The disordered stretch occupies residues 1-21 (MVLMQDKGSSQQWPGLGGEGG). 8 helical membrane passes run 225–245 (PMLL…FLMA), 253–273 (ALAL…SYLF), 281–301 (VTLA…FLPL), 320–340 (ISKI…GVLI), 361–381 (VLLL…LAGI), 383–403 (LPIV…GYCL), 417–437 (VSIE…QLSL), and 450–470 (FIVA…HFIY).

It belongs to the bile acid:sodium symporter (BASS) (TC 2.A.28) family.

Its subcellular location is the membrane. Its function is as follows. The ubiquitous expression and the conservation of the sequence in distant animal species suggest that the gene codes for a protein with housekeeping functions. This Homo sapiens (Human) protein is P3 protein (SLC10A3).